The primary structure comprises 454 residues: MSARILVVDDIEANVRLLEAKLTAEYYEVSTAMDGPTALAMAARDLPDIILLDVMMPGMDGFTVCRKLKDDPTTRHIPVVLITALDGRGDRIQGLESGASDFLTKPIDDVMLFARVRSLTRFKLVIDELRQREASGRRMGVIAGAAARLDGLGGRVLIVDDNERQAQRVAAELGVEHRPVIESDPEKAKISAGGPVDLVIVNAAAKNFDGLRFTAALRSEERTRQLPVLAMVDPDDRGRMVKALEIGVNDILSRPIDPQELSARVKTQIQRKRYTDYLRNNLDHSLELAVTDQLTGLHNRRYMTGQLDSLVKRATLGGDPVSALLIDIDFFKKINDTFGHDIGDEVLREFALRLASNVRAIDLPCRYGGEEFVVIMPDTALADALRIAERIRMHVSGSPFTVAHGREMLNVTISIGVSATAGEGDTPEALLKRADEGVYQAKASGRNAVVGKAA.

2 consecutive Response regulatory domains span residues 4–120 and 155–269; these read RILV…RSLT and RVLI…KTQI. Mg(2+) contacts are provided by aspartate 9, aspartate 10, aspartate 53, and methionine 55. A 4-aspartylphosphate modification is found at aspartate 53. The 136-residue stretch at 319-454 folds into the GGDEF domain; it reads DPVSALLIDI…GRNAVVGKAA (136 aa). Substrate is bound by residues asparagine 335 and aspartate 344. Glutamate 370 functions as the Proton acceptor in the catalytic mechanism.

Homodimer. Inactive monomer in solution. In terms of processing, phosphorylated by PleC and DivJ. Phosphorylation stimulates cyclase activity.

It localises to the cytoplasm. The catalysed reaction is 2 GTP = 3',3'-c-di-GMP + 2 diphosphate. It functions in the pathway purine metabolism; 3',5'-cyclic di-GMP biosynthesis. Its activity is regulated as follows. Allosterically inhibited by the product c-di-GMP. Functionally, response regulator that is part of a signal transduction pathway controlling cell differentiation in the swarmer-to-stalked cell transition. Its function is as follows. Catalyzes the condensation of two GTP molecules to the cyclic dinucleotide di-GMP (c-di-GMP), which acts as a secondary messenger. This chain is Response regulator PleD (pleD), found in Caulobacter vibrioides (strain ATCC 19089 / CIP 103742 / CB 15) (Caulobacter crescentus).